The primary structure comprises 433 residues: MINWLHLPDEIWLLIGNFISDREICCLAFVNTRFLNLLSYNKINQNLVLECAIEVDNIYIINKLIDKTDVNGLKFVMRWSALHGSFQIIKSIIRKDHNNDLLDLHAINWSIESNHLHISKYLIDKYNIVIIPESAFIYGRLDIIDWMFSRQNQNNANKKSTIKKTVDFLKSKFISHDYFYDSMIELACLYGHVHVVQYFIDNQCSVRQKWLYYSCLSGNFDLVKLLCKNGCRIFSNRRLINTAITGGNLDIVRYCLLHSKIDLAQNNFAMKIAIKTGHIGIVRLLVSHGSDIHFDNGECMIIASRGGFANIVKFFLENKVYMSEKVLKIAAIRGYLDIIKVFIKYASACMSNINSVCKSNGSMVVDNHINYIVNITRNFNMRKILIWSLINNRINIVTYLLEIFPKLREILNQIMYQHPEISEKIDLDSLYKN.

ANK repeat units follow at residues 44–70 (NQNL…KTDV), 71–101 (NGLK…NNDL), 102–131 (LDLH…IVII), 179–205 (FYDS…NQCS), 206–235 (VRQK…RIFS), 237–264 (RRLI…IDLA), 265–294 (QNNF…DIHF), 296–321 (NGEC…NKVY), 322–351 (MSEK…ACMS), and 380–409 (NMRK…KLRE).

The polypeptide is Putative ankyrin repeat protein R784 (Acanthamoeba polyphaga mimivirus (APMV)).